Reading from the N-terminus, the 1376-residue chain is Protein FAM135B (1376 aa).

Residues 431 to 442 are compositionally biased toward acidic residues; that stretch reads NEDECEFSEESP. Positions 431-489 are disordered; the sequence is NEDECEFSEESPSENTHVGSKPHSIQSTTVHENASFEKPNVGTKAQEDCSTEGPEQGFD. Residues 443-462 are compositionally biased toward polar residues; sequence SENTHVGSKPHSIQSTTVHE.

Belongs to the FAM135 family.

The chain is Protein FAM135B (fam135b) from Xenopus laevis (African clawed frog).